The primary structure comprises 184 residues: Flavodoxin FldP (184 aa).

Residues 4–176 (AVVVYFSGYG…TVKLYAARVA (173 aa)) enclose the Flavodoxin-like domain. FMN contacts are provided by residues 10–14 (SGYGH) and 91–147 (GFTN…SVGA).

This sequence belongs to the FldP flavodoxin family. FMN serves as cofactor.

Its function is as follows. Flavodoxins are low-potential electron donors to a number of redox enzymes. FldP protects the cell from oxidative stress and reactive oxygen species (ROS) damage, thereby expanding the capabilities of P.aeruginosa to thrive in hostile environments, and contributes to bacterial survival within the host. In vitro, is able to mediate ferredoxin-NADP(H) reductase (FNR)-driven cytochrome c reduction. The protein is Flavodoxin FldP of Pseudomonas aeruginosa (strain UCBPP-PA14).